Reading from the N-terminus, the 1077-residue chain is ATP-dependent helicase/deoxyribonuclease subunit B (1077 aa).

This sequence belongs to the helicase family. AddB/RexB type 2 subfamily. As to quaternary structure, heterodimer of AddA and RexB. Mg(2+) is required as a cofactor.

Its function is as follows. The heterodimer acts as both an ATP-dependent DNA helicase and an ATP-dependent, dual-direction single-stranded exonuclease. Recognizes the chi site generating a DNA molecule suitable for the initiation of homologous recombination. This subunit has 5' -&gt; 3' nuclease activity but not helicase activity. This Streptococcus agalactiae serotype Ia (strain ATCC 27591 / A909 / CDC SS700) protein is ATP-dependent helicase/deoxyribonuclease subunit B.